A 648-amino-acid chain; its full sequence is L-aspartate oxidase 2-b, chloroplastic (648 aa).

FAD contacts are provided by residues 98 to 101, K120, 127 to 134, and D298; these read SGIA and STNYAQGG. The active-site Proton donor/acceptor is the R373. FAD is bound by residues E458 and 474-475; that span reads SL.

Belongs to the FAD-dependent oxidoreductase 2 family. NadB subfamily. It depends on FAD as a cofactor.

It localises to the plastid. Its subcellular location is the chloroplast. It carries out the reaction L-aspartate + O2 = iminosuccinate + H2O2. Its pathway is alkaloid biosynthesis; nicotine biosynthesis. It participates in cofactor biosynthesis; NAD(+) biosynthesis; iminoaspartate from L-aspartate (oxidase route): step 1/1. Functionally, involved in the biosynthesis of pyridine alkaloid natural products, leading mainly to the production of anabasine, anatabine, nicotine and nornicotine, effective deterrents against herbivores with antiparasitic and pesticide properties (neurotoxins); nornicotine serves as the precursor in the synthesis of the carcinogen compound N'-nitrosonornicotine (NNN). Catalyzes the oxidation of L-aspartate to iminoaspartate. This Nicotiana tabacum (Common tobacco) protein is L-aspartate oxidase 2-b, chloroplastic.